The sequence spans 317 residues: Spore protein CgeB (317 aa).

Its function is as follows. May be involved in maturation of the outermost layer of the spore. May act as a glycosyltransferase that contributes to the glycosylation state of the spore. The chain is Spore protein CgeB from Bacillus subtilis (strain 168).